The primary structure comprises 381 residues: Dual-specificity RNA methyltransferase RlmN (381 aa).

The active-site Proton acceptor is Glu-86. The region spanning 105 to 338 (RHARYTICVS…CTIRQSKGLD (234 aa)) is the Radical SAM core domain. Cys-112 and Cys-343 are oxidised to a cystine. Positions 119, 123, and 126 each coordinate [4Fe-4S] cluster. S-adenosyl-L-methionine is bound by residues 169–170 (GE), Ser-201, 224–226 (SLH), and Asn-300. Cys-343 (S-methylcysteine intermediate) is an active-site residue. A disordered region spans residues 351–381 (ENPKFRANVSGNSAAKTEEKPTNDKTNVSKK).

It belongs to the radical SAM superfamily. RlmN family. It depends on [4Fe-4S] cluster as a cofactor.

It is found in the cytoplasm. The catalysed reaction is adenosine(2503) in 23S rRNA + 2 reduced [2Fe-2S]-[ferredoxin] + 2 S-adenosyl-L-methionine = 2-methyladenosine(2503) in 23S rRNA + 5'-deoxyadenosine + L-methionine + 2 oxidized [2Fe-2S]-[ferredoxin] + S-adenosyl-L-homocysteine. It catalyses the reaction adenosine(37) in tRNA + 2 reduced [2Fe-2S]-[ferredoxin] + 2 S-adenosyl-L-methionine = 2-methyladenosine(37) in tRNA + 5'-deoxyadenosine + L-methionine + 2 oxidized [2Fe-2S]-[ferredoxin] + S-adenosyl-L-homocysteine. Functionally, specifically methylates position 2 of adenine 2503 in 23S rRNA and position 2 of adenine 37 in tRNAs. m2A2503 modification seems to play a crucial role in the proofreading step occurring at the peptidyl transferase center and thus would serve to optimize ribosomal fidelity. The protein is Dual-specificity RNA methyltransferase RlmN of Campylobacter concisus (strain 13826).